An 864-amino-acid polypeptide reads, in one-letter code: 3-O-alpha-D-mannopyranosyl-alpha-D-mannopyranose xylosylphosphotransferase (864 aa).

Positions 1-14 (MPPTALPPLRPPAQ) are enriched in pro residues. The disordered stretch occupies residues 1–47 (MPPTALPPLRPPAQPYDSYSSSLSPSSPRFHPASAPHGRRAPSPSRL). Over 1 to 81 (MPPTALPPLR…HIRPHLTPRT (81 aa)) the chain is Cytoplasmic. Low complexity predominate over residues 15–28 (PYDSYSSSLSPSSP). Residues 82-102 (LTPLLLWTLALWLVHHFLFPF) traverse the membrane as a helical segment. Residues 103-864 (SSPLAALSRP…WDPVKDRYHD (762 aa)) lie on the Lumenal side of the membrane. 2 N-linked (GlcNAc...) asparagine glycosylation sites follow: N199 and N301.

This sequence belongs to the XPT1 family. The cofactor is Mn(2+).

The protein localises to the golgi apparatus membrane. The enzyme catalyses 3-alpha-D-mannopyranosyl-alpha-D-mannopyranose + UDP-alpha-D-xylose = 3-O-(6-O-alpha-D-xylosylphospho-alpha-D-mannopyranosyl)-alpha-D-mannopyranose + UMP + H(+). Its function is as follows. Xylosylphosphotransferase that is specific for UDP-xylose as a donor and mannose as an acceptor to form a xylose-alpha-1-phosphate-6-mannose linkage. Functions in the O-glycosylation of proteins en route through the secretory pathway. The sequence is that of 3-O-alpha-D-mannopyranosyl-alpha-D-mannopyranose xylosylphosphotransferase (XPT1) from Cryptococcus neoformans var. neoformans serotype D (strain B-3501A) (Filobasidiella neoformans).